A 379-amino-acid chain; its full sequence is F-box protein At5g18160 (379 aa).

Residues 1–26 (MDKQDEKKQGTTKSSSTLTTRCSHGN) are disordered. Over residues 11–26 (TTKSSSTLTTRCSHGN) the composition is skewed to polar residues. The 47-residue stretch at 28 to 74 (ISQSNSIPLDITIEILSRLPAKSIVRSRSVSKLWSSITTTPEFIKHR) folds into the F-box domain.

This is F-box protein At5g18160 from Arabidopsis thaliana (Mouse-ear cress).